Consider the following 247-residue polypeptide: V-type proton ATPase subunit D (247 aa).

Belongs to the V-ATPase D subunit family. As to quaternary structure, V-ATPase is a heteromultimeric enzyme made up of two complexes: the ATP-hydrolytic V1 complex and the proton translocation V0 complex. The V1 complex consists of three catalytic AB heterodimers that form a heterohexamer, three peripheral stalks each consisting of EG heterodimers, one central rotor including subunits D and F, and the regulatory subunits C and H. The proton translocation complex V0 consists of the proton transport subunit a, a ring of proteolipid subunits c9c'', rotary subunit d, subunits e and f, and the accessory subunits ATP6AP1/Ac45 and ATP6AP2/PRR. Interacts with SNX10.

The protein resides in the membrane. Its subcellular location is the cytoplasmic vesicle. It localises to the clathrin-coated vesicle membrane. It is found in the cytoplasm. The protein localises to the cytoskeleton. The protein resides in the microtubule organizing center. Its subcellular location is the centrosome. It localises to the cell projection. It is found in the cilium. In terms of biological role, subunit of the V1 complex of vacuolar(H+)-ATPase (V-ATPase), a multisubunit enzyme composed of a peripheral complex (V1) that hydrolyzes ATP and a membrane integral complex (V0) that translocates protons. V-ATPase is responsible for acidifying and maintaining the pH of intracellular compartments and in some cell types, is targeted to the plasma membrane, where it is responsible for acidifying the extracellular environment. May play a role in cilium biogenesis through regulation of the transport and the localization of proteins to the cilium. The chain is V-type proton ATPase subunit D (ATP6V1D) from Homo sapiens (Human).